We begin with the raw amino-acid sequence, 356 residues long: 4-hydroxy-3-methylbut-2-en-1-yl diphosphate synthase (flavodoxin) (356 aa).

Cysteine 262, cysteine 265, cysteine 297, and glutamate 304 together coordinate [4Fe-4S] cluster.

This sequence belongs to the IspG family. [4Fe-4S] cluster serves as cofactor.

It carries out the reaction (2E)-4-hydroxy-3-methylbut-2-enyl diphosphate + oxidized [flavodoxin] + H2O + 2 H(+) = 2-C-methyl-D-erythritol 2,4-cyclic diphosphate + reduced [flavodoxin]. Its pathway is isoprenoid biosynthesis; isopentenyl diphosphate biosynthesis via DXP pathway; isopentenyl diphosphate from 1-deoxy-D-xylulose 5-phosphate: step 5/6. Converts 2C-methyl-D-erythritol 2,4-cyclodiphosphate (ME-2,4cPP) into 1-hydroxy-2-methyl-2-(E)-butenyl 4-diphosphate. In Campylobacter fetus subsp. fetus (strain 82-40), this protein is 4-hydroxy-3-methylbut-2-en-1-yl diphosphate synthase (flavodoxin).